We begin with the raw amino-acid sequence, 298 residues long: MTPLDKGLDKARVLIEALPYIQKFAGKTVVIKYGGHAMLEQDLKEKVMLDILLLHSVGIRPVVVHGGGPEINSMLTRVGKESHFVRGLRVTDKETMEIASMVLVGKLNTEIISLLNRFGGRAVGLSGKDAQLLQAVKKPMQFQNSQGELEDVDLGFVGEIEQIRPEIVTSLVEQGYIPVISPVAGGEDGESYNINADTAAGEIAKALKADKFLLLTDVPGVLRDVEDKDSLLSVIKEDEISGLIDLGVISGGMIPKVECARAALQGGVGSVHILDGRIPHAILLELFTDGGIGTMFNA.

Residues glycine 67–glycine 68, arginine 89, and asparagine 193 each bind substrate.

The protein belongs to the acetylglutamate kinase family. ArgB subfamily.

It localises to the cytoplasm. The enzyme catalyses N-acetyl-L-glutamate + ATP = N-acetyl-L-glutamyl 5-phosphate + ADP. It functions in the pathway amino-acid biosynthesis; L-arginine biosynthesis; N(2)-acetyl-L-ornithine from L-glutamate: step 2/4. Catalyzes the ATP-dependent phosphorylation of N-acetyl-L-glutamate. The chain is Acetylglutamate kinase from Desulfitobacterium hafniense (strain DSM 10664 / DCB-2).